Here is a 368-residue protein sequence, read N- to C-terminus: MNKTIMALAIMMASFAANASVLPETPVPFKSGTGAIDNDTVYIGLGSAGTAWYKLDTQAKDKKWTALAAFPGGPREQATSAFIDGNLYVFGGIGKNSEGLTQVFNDVHKYNPKTNSWVKLMSHAPMGMAGHVTFVHNGKAYVTGGVNQNIFNGYFEDLNEAGKDSTAIDKINAHYFDKKAEDYFFNKFLLSFDPSTQQWSYAGESPWYGTAGAAVVNKGDKTWLINGEAKPGLRTDAVFELDFTGNNLKWNKLDPVSSPDGVAGGFAGISNDSLIFAGGAGFKGSRENYQNGKNYAHEGLKKSYSTDIHLWHNGKWDKSGELSQGRAYGVSLPWNNSLLIIGGETAGGKAVTDSVLISVKDNKVTVQN.

Residues 1-19 (MNKTIMALAIMMASFAANA) form the signal peptide. 7 Kelch repeats span residues 40-84 (TVYI…AFID), 86-137 (NLYV…FVHN), 139-173 (KAYV…KINA), 174-219 (HYFD…VNKG), 222-265 (TWLI…VAGG), 287-336 (ENYQ…PWNN), and 338-367 (LLII…VTVQ). Residue glutamate 228 is the Proton acceptor of the active site.

It belongs to the NanM family. Homodimer.

Its subcellular location is the periplasm. It carries out the reaction N-acetyl-alpha-neuraminate = N-acetyl-beta-neuraminate. Its function is as follows. Converts alpha-N-acetylneuranimic acid (Neu5Ac) to the beta-anomer, accelerating the equilibrium between the alpha- and beta-anomers. Probably facilitates sialidase-negative bacteria to compete successfully for limited amounts of extracellular Neu5Ac, which is likely taken up in the beta-anomer. In addition, the rapid removal of sialic acid from solution might be advantageous to the bacterium to damp down host responses. The protein is N-acetylneuraminate epimerase of Shigella flexneri serotype 5b (strain 8401).